The sequence spans 680 residues: WD repeat-containing protein 48 homolog (680 aa).

8 WD repeats span residues 26 to 65 (QHRNGVNSLQLDPNNGKLYSAGRDAIIRVWNTRSESSEKY), 71 to 110 (HHNDWVNDIVLCCNGRNLISASCDTTVKVWNAQKGFCMST), 113 to 152 (THRDYVQALAYAKDREQVASAGLDKAIFLWDVNTLTALTA), 164 to 203 (GSKDSIYSLAMNPSGTVIVSGSTENILRIWDPRTCMRSMK), 206 to 245 (GHTENVRCLVVSPDGNQVVSGSSDGTIKVWNLGQQRCVQT), 248 to 287 (VHKEGVWSLLMSENFQYIISGSRDQNIIVTEMRNPSNKTL), 290 to 329 (EEKAPVLSLGYNMDKTGVWATTWNSDIRCWKLPMYDRGTL), and 350 to 389 (KGGAAIKECTVLNDKRYILTKDSQDQVVLYDVLRVVKKDT). The interval 594–618 (TPSGANANNSLQNSQSDGNSEGSQL) is disordered. A compositionally biased stretch (low complexity) spans 596–609 (SGANANNSLQNSQS).

Belongs to the WD repeat WDR48 family. As to quaternary structure, catalytic component of the Usp12-46 deubiquitylase complex consisting of Usp12-46, Wdr20 and Uaf1; regulatory subunit that, together wtih Wdr20, stabilizes Usp12-46. The Usp12-46 deubiquitylase complex associates with arr/arrow; the interaction leads to deubiquitination and stabilization of arr/arrow.

Functionally, regulatory component of the Usp12-46 deubiquitylase complex. activates deubiquitination by increasing the catalytic turnover without increasing the affinity of deubiquitinating enzymes for the substrate. The complex deubiquitylates the wg/wingless-signaling receptor arr/arrow, which stabilizes the receptor and increases its concentration at the cell surface; this enhances the sensitivity of cells to wg/wingless-signal stimulation. This increases the amplitude and spatial range of the signaling response to the wg/wingless morphogen gradient, facilitating the precise concentration-dependent regulation of its target genes. Together with Wdr20 and Usp12-46 required for wg/wingless-mediated signaling in the wing imaginal disc and for wg/wingless-dependent regulation of intestinal stem cell proliferation. This Drosophila persimilis (Fruit fly) protein is WD repeat-containing protein 48 homolog.